The sequence spans 720 residues: Fatty acid CoA ligase Acsl3 (720 aa).

The chain crosses the membrane as a helical; Signal-anchor for type III membrane protein span at residues 21-41 (ILLYFIHFIISLYTILTYIPF). Topologically, residues 42-720 (YFLCESKQEK…ADIERMYGRK (679 aa)) are cytoplasmic. At S683 the chain carries Phosphoserine.

It belongs to the ATP-dependent AMP-binding enzyme family. Mg(2+) serves as cofactor. As to expression, predominantly expressed in the brain, and to a much lesser extent, in lung, adrenal gland, kidney, small intestine, and adipose tissue but not detected in heart or liver.

It localises to the mitochondrion outer membrane. Its subcellular location is the peroxisome membrane. It is found in the microsome membrane. The protein resides in the endoplasmic reticulum membrane. It catalyses the reaction a long-chain fatty acid + ATP + CoA = a long-chain fatty acyl-CoA + AMP + diphosphate. The catalysed reaction is (5Z,8Z,11Z,14Z)-eicosatetraenoate + ATP + CoA = (5Z,8Z,11Z,14Z)-eicosatetraenoyl-CoA + AMP + diphosphate. It carries out the reaction a medium-chain fatty acid + ATP + CoA = a medium-chain fatty acyl-CoA + AMP + diphosphate. The enzyme catalyses 15-hydroxy-(5Z,8Z,11Z,13E)-eicosatetraenoate + ATP + CoA = 15-hydroxy-(5Z,8Z,11Z,13E)-eicosatetraenoyl-CoA + AMP + diphosphate. It catalyses the reaction 12-hydroxy-(5Z,8Z,10E,14Z)-eicosatetraenoate + ATP + CoA = 12-hydroxy-(5Z,8Z,10E,14Z)-eicosatetraenoyl-CoA + AMP + diphosphate. The catalysed reaction is 5-hydroxy-(6E,8Z,11Z,14Z)-eicosatetraenoate + ATP + CoA = 5-hydroxy-(6E,8Z,11Z,14Z)-eicosatetraenoyl-CoA + AMP + diphosphate. It carries out the reaction 14,15-epoxy-(5Z,8Z,11Z)-eicosatrienoate + ATP + CoA = 14,15-epoxy-(5Z,8Z,11Z)-eicosatrienoyl-CoA + AMP + diphosphate. The enzyme catalyses 11,12-epoxy-(5Z,8Z,14Z)-eicosatrienoate + ATP + CoA = 11,12-epoxy-(5Z,8Z,14Z)-eicosatrienoyl-CoA + AMP + diphosphate. It catalyses the reaction (E)-hexadec-2-enoate + ATP + CoA = (2E)-hexadecenoyl-CoA + AMP + diphosphate. The catalysed reaction is hexadecanoate + ATP + CoA = hexadecanoyl-CoA + AMP + diphosphate. It carries out the reaction tetradecanoate + ATP + CoA = tetradecanoyl-CoA + AMP + diphosphate. The enzyme catalyses dodecanoate + ATP + CoA = dodecanoyl-CoA + AMP + diphosphate. It catalyses the reaction octadecanoate + ATP + CoA = octadecanoyl-CoA + AMP + diphosphate. The catalysed reaction is eicosanoate + ATP + CoA = eicosanoyl-CoA + AMP + diphosphate. It carries out the reaction (9Z)-octadecenoate + ATP + CoA = (9Z)-octadecenoyl-CoA + AMP + diphosphate. The enzyme catalyses (9Z)-hexadecenoate + ATP + CoA = (9Z)-hexadecenoyl-CoA + AMP + diphosphate. It catalyses the reaction (9Z,12Z)-octadecadienoate + ATP + CoA = (9Z,12Z)-octadecadienoyl-CoA + AMP + diphosphate. The catalysed reaction is (9Z,12Z,15Z)-octadecatrienoate + ATP + CoA = (9Z,12Z,15Z)-octadecatrienoyl-CoA + AMP + diphosphate. It carries out the reaction (4Z,7Z,10Z,13Z,16Z,19Z)-docosahexaenoate + ATP + CoA = (4Z,7Z,10Z,13Z,16Z,19Z)-docosahexaenoyl-CoA + AMP + diphosphate. The enzyme catalyses (5Z,8Z,11Z,14Z,17Z)-eicosapentaenoate + ATP + CoA = (5Z,8Z,11Z,14Z,17Z)-eicosapentaenoyl-CoA + AMP + diphosphate. It catalyses the reaction a fatty acid + ATP + CoA = a fatty acyl-CoA + AMP + diphosphate. Functionally, catalyzes the conversion of long-chain fatty acids to their active form acyl-CoA for both synthesis of cellular lipids, and degradation via beta-oxidation. ACSL3 is required for the incorporation of fatty acids into phosphatidylcholine, the major phospholipid located on the surface of VLDL (very low density lipoproteins). Has mainly an anabolic role in energy metabolism. Mediates hepatic lipogenesis. Preferentially uses myristate, laurate, arachidonate and eicosapentaenoate as substrates. Both isoforms exhibit the same level of activity. This chain is Fatty acid CoA ligase Acsl3, found in Rattus norvegicus (Rat).